A 94-amino-acid polypeptide reads, in one-letter code: Aspartyl/glutamyl-tRNA(Asn/Gln) amidotransferase subunit C (94 aa).

It belongs to the GatC family. Heterotrimer of A, B and C subunits.

It catalyses the reaction L-glutamyl-tRNA(Gln) + L-glutamine + ATP + H2O = L-glutaminyl-tRNA(Gln) + L-glutamate + ADP + phosphate + H(+). It carries out the reaction L-aspartyl-tRNA(Asn) + L-glutamine + ATP + H2O = L-asparaginyl-tRNA(Asn) + L-glutamate + ADP + phosphate + 2 H(+). In terms of biological role, allows the formation of correctly charged Asn-tRNA(Asn) or Gln-tRNA(Gln) through the transamidation of misacylated Asp-tRNA(Asn) or Glu-tRNA(Gln) in organisms which lack either or both of asparaginyl-tRNA or glutaminyl-tRNA synthetases. The reaction takes place in the presence of glutamine and ATP through an activated phospho-Asp-tRNA(Asn) or phospho-Glu-tRNA(Gln). The chain is Aspartyl/glutamyl-tRNA(Asn/Gln) amidotransferase subunit C from Desulfitobacterium hafniense (strain DSM 10664 / DCB-2).